A 178-amino-acid chain; its full sequence is Cysteine-rich venom protein VAR3 (178 aa).

Residues 1–22 form the signal peptide; it reads MILLKLYLTLAAILCQSRGTTS. Residues 41–169 form the SCP domain; sequence NKHNDLRRTV…PLKYFLVCQY (129 aa). 3 disulfide bridges follow: cysteine 77-cysteine 156, cysteine 95-cysteine 170, and cysteine 151-cysteine 167.

Belongs to the CRISP family. Contains 8 disulfide bonds. In terms of tissue distribution, expressed by the venom gland.

Its subcellular location is the secreted. Its function is as follows. Blocks ryanodine receptors, and potassium channels. This is Cysteine-rich venom protein VAR3 from Varanus acanthurus (Ridge-tailed monitor).